The primary structure comprises 302 residues: Recombination-associated protein RdgC (302 aa).

Belongs to the RdgC family.

It localises to the cytoplasm. The protein localises to the nucleoid. In terms of biological role, may be involved in recombination. The protein is Recombination-associated protein RdgC of Actinobacillus succinogenes (strain ATCC 55618 / DSM 22257 / CCUG 43843 / 130Z).